Reading from the N-terminus, the 81-residue chain is Small ribosomal subunit protein bS16 (81 aa).

This sequence belongs to the bacterial ribosomal protein bS16 family.

This Coprothermobacter proteolyticus (strain ATCC 35245 / DSM 5265 / OCM 4 / BT) protein is Small ribosomal subunit protein bS16.